Reading from the N-terminus, the 440-residue chain is Serine/threonine-protein kinase VRK1 (440 aa).

Residues 37–317 form the Protein kinase domain; the sequence is WKLGLPIGQG…LLEYTEKPLY (281 aa). ATP is bound by residues 43 to 51 and K71; that span reads IGQGGFGCI. K71 is covalently cross-linked (Glycyl lysine isopeptide (Lys-Gly) (interchain with G-Cter in SUMO2)). Residue D177 is the Proton acceptor of the active site. S342 carries the phosphoserine; by PLK3 modification. S376 carries the post-translational modification Phosphoserine. T378 is subject to Phosphothreonine. Composition is skewed to polar residues over residues 379–391 and 398–410; these read QVQE…SVES and SMSQ…SSSD. Positions 379 to 440 are disordered; the sequence is QVQEAAQTRS…GSRTRKKAQK (62 aa). Residues 387–393 form a required for interaction with the nucleosome region; the sequence is RSVESQG.

It belongs to the protein kinase superfamily. CK1 Ser/Thr protein kinase family. VRK subfamily. In terms of assembly, interacts with HDAC1, KAT2B, SETDB1, KDM3A and KDM4A. Associates with the nucleosome through interactions with nucleosome DNA, histone H2A and histone H2B; the interaction with H2A and H2B is mediated by the nucleosome acidic patch, a cluster of negatively charged residues of H2A and H2B forming a cleft within the nucleosome core. Post-translationally, autophosphorylated at various serine and threonine residues. Autophosphorylation does not impair its ability to phosphorylate p53/TP53. Phosphorylation by PLK3 leads to induction of Golgi fragmentation during mitosis. In terms of tissue distribution, highly expressed in testis. Expressed in liver, kidney and muscle. Weakly expressed in thymus, bone marrow and spleen.

The protein resides in the nucleus. It localises to the cytoplasm. Its subcellular location is the cajal body. The catalysed reaction is L-seryl-[protein] + ATP = O-phospho-L-seryl-[protein] + ADP + H(+). The enzyme catalyses L-threonyl-[protein] + ATP = O-phospho-L-threonyl-[protein] + ADP + H(+). Its activity is regulated as follows. Active in presence of Mn(2+), Mg(2+) and Zn(2+), but is not functional with Ca(2+) or Cu(2+). Has a higher affinity for Mn(2+) than for Mg(2+). RAN inhibits its autophosphorylation and its ability to phosphorylate histone H3. In terms of biological role, serine/threonine kinase involved in the regulation of key cellular processes including the cell cycle, nuclear condensation, transcription regulation, and DNA damage response. Controls chromatin organization and remodeling by mediating phosphorylation of histone H3 on 'Thr-4' and histone H2AX (H2aXT4ph). It also phosphorylates KAT5 in response to DNA damage, promoting KAT5 association with chromatin and histone acetyltransferase activity. Is involved in the regulation of cell cycle progression of neural progenitors, and is required for proper cortical neuronal migration. Is involved in neurite elongation and branching in motor neurons, and has an essential role in Cajal bodies assembly, acting through COIL phosphorylation and the control of coilin degradation. Involved in Golgi disassembly during the cell cycle: following phosphorylation by PLK3 during mitosis, required to induce Golgi fragmentation. Phosphorylates BANF1: disrupts its ability to bind DNA, reduces its binding to LEM domain-containing proteins and causes its relocalization from the nucleus to the cytoplasm. Phosphorylates TP53BP1 and p53/TP53 on 'Thr-18', preventing the interaction between p53/TP53 and MDM2. Phosphorylates ATF2 which activates its transcriptional activity. Phosphorylates JUN. This Mus musculus (Mouse) protein is Serine/threonine-protein kinase VRK1.